A 177-amino-acid chain; its full sequence is FCS-Like Zinc finger 1 (177 aa).

A compositionally biased stretch (low complexity) spans 22–46 (SLSEMEAGFSGNNNNSNNHGNPQNG). 2 disordered regions span residues 22 to 49 (SLSE…GVVS) and 134 to 177 (ERDE…VAAA). An FLZ-type zinc finger spans residues 96 to 140 (HFLDSCFLCKKPLGDNRDIYMYRGDTPFCSEECRQEQIERDEAKE). Basic and acidic residues-rich tracts occupy residues 134–143 (ERDEAKEKKQ) and 154–168 (RRKE…RDYA).

This sequence belongs to the FLZ family. As to quaternary structure, interacts with KIN10 and KIN11 via its FLZ-type zinc finger domain. Interacts with KINB1, KINB2 and KINB3 via its N-terminal part. Interacts with DSP3 and BBX21 via its FLZ-type zinc finger domain. Forms heterodimer with FLZ7 and FLZ15 in vitro.

It is found in the nucleus. Its subcellular location is the cytoplasm. In terms of biological role, may act as an adapter to facilitate the interaction of SnRK1 complex with effector proteins, conferring tissue- and stimulus-type specific differences in the SnRK1 regulation pathway. The protein is FCS-Like Zinc finger 1 of Arabidopsis thaliana (Mouse-ear cress).